The chain runs to 75 residues: Large ribosomal subunit protein bL31 (75 aa).

Zn(2+) is bound by residues cysteine 16, cysteine 18, cysteine 37, and cysteine 40.

Belongs to the bacterial ribosomal protein bL31 family. Type A subfamily. In terms of assembly, part of the 50S ribosomal subunit. The cofactor is Zn(2+).

In terms of biological role, binds the 23S rRNA. This Baumannia cicadellinicola subsp. Homalodisca coagulata protein is Large ribosomal subunit protein bL31.